The primary structure comprises 169 residues: Peptide deformylase (169 aa).

2 residues coordinate Fe cation: C91 and H133. The active site involves E134. H137 lines the Fe cation pocket.

The protein belongs to the polypeptide deformylase family. Requires Fe(2+) as cofactor.

It carries out the reaction N-terminal N-formyl-L-methionyl-[peptide] + H2O = N-terminal L-methionyl-[peptide] + formate. In terms of biological role, removes the formyl group from the N-terminal Met of newly synthesized proteins. Requires at least a dipeptide for an efficient rate of reaction. N-terminal L-methionine is a prerequisite for activity but the enzyme has broad specificity at other positions. In Serratia proteamaculans (strain 568), this protein is Peptide deformylase.